A 692-amino-acid chain; its full sequence is Ribonuclease R (692 aa).

An RNB domain is found at 204–525 (RKDLRDLLCF…IVHRLLFHPL (322 aa)). The region spanning 563–648 (KKFLDEQPAT…LTQAIEWTLI (86 aa)) is the S1 motif domain. Residues 651-692 (KERSSSKKKKAKAKSNATQVKKKSSSKKKKAVSKAKKNRGGK) form a disordered region. Over residues 670–692 (VKKKSSSKKKKAVSKAKKNRGGK) the composition is skewed to basic residues.

It belongs to the RNR ribonuclease family. RNase R subfamily.

Its subcellular location is the cytoplasm. The enzyme catalyses Exonucleolytic cleavage in the 3'- to 5'-direction to yield nucleoside 5'-phosphates.. 3'-5' exoribonuclease that releases 5'-nucleoside monophosphates and is involved in maturation of structured RNAs. This Chlamydia muridarum (strain MoPn / Nigg) protein is Ribonuclease R.